We begin with the raw amino-acid sequence, 171 residues long: ATP synthase subunit b (171 aa).

Residues 32-52 (FFAVLLIFLIVLGVIAKWVVP) traverse the membrane as a helical segment.

The protein belongs to the ATPase B chain family. As to quaternary structure, F-type ATPases have 2 components, F(1) - the catalytic core - and F(0) - the membrane proton channel. F(1) has five subunits: alpha(3), beta(3), gamma(1), delta(1), epsilon(1). F(0) has three main subunits: a(1), b(2) and c(10-14). The alpha and beta chains form an alternating ring which encloses part of the gamma chain. F(1) is attached to F(0) by a central stalk formed by the gamma and epsilon chains, while a peripheral stalk is formed by the delta and b chains.

It localises to the cell membrane. Its function is as follows. F(1)F(0) ATP synthase produces ATP from ADP in the presence of a proton or sodium gradient. F-type ATPases consist of two structural domains, F(1) containing the extramembraneous catalytic core and F(0) containing the membrane proton channel, linked together by a central stalk and a peripheral stalk. During catalysis, ATP synthesis in the catalytic domain of F(1) is coupled via a rotary mechanism of the central stalk subunits to proton translocation. Component of the F(0) channel, it forms part of the peripheral stalk, linking F(1) to F(0). This is ATP synthase subunit b from Mycolicibacterium gilvum (strain PYR-GCK) (Mycobacterium gilvum (strain PYR-GCK)).